Reading from the N-terminus, the 31-residue chain is Cytochrome b6-f complex subunit 6 (31 aa).

Residues 4–24 (ITSYFGFLLAALTITSVLFIG) traverse the membrane as a helical segment.

This sequence belongs to the PetL family. As to quaternary structure, the 4 large subunits of the cytochrome b6-f complex are cytochrome b6, subunit IV (17 kDa polypeptide, PetD), cytochrome f and the Rieske protein, while the 4 small subunits are PetG, PetL, PetM and PetN. The complex functions as a dimer.

The protein localises to the plastid. Its subcellular location is the chloroplast thylakoid membrane. Functionally, component of the cytochrome b6-f complex, which mediates electron transfer between photosystem II (PSII) and photosystem I (PSI), cyclic electron flow around PSI, and state transitions. PetL is important for photoautotrophic growth as well as for electron transfer efficiency and stability of the cytochrome b6-f complex. This chain is Cytochrome b6-f complex subunit 6, found in Nandina domestica (Heavenly bamboo).